Here is a 513-residue protein sequence, read N- to C-terminus: Histidine ammonia-lyase (513 aa).

Residues 144–146 constitute a cross-link (5-imidazolinone (Ala-Gly)); that stretch reads ASG. The residue at position 145 (Ser145) is a 2,3-didehydroalanine (Ser).

The protein belongs to the PAL/histidase family. Post-translationally, contains an active site 4-methylidene-imidazol-5-one (MIO), which is formed autocatalytically by cyclization and dehydration of residues Ala-Ser-Gly.

Its subcellular location is the cytoplasm. The catalysed reaction is L-histidine = trans-urocanate + NH4(+). Its pathway is amino-acid degradation; L-histidine degradation into L-glutamate; N-formimidoyl-L-glutamate from L-histidine: step 1/3. In Streptococcus pyogenes serotype M49 (strain NZ131), this protein is Histidine ammonia-lyase.